Reading from the N-terminus, the 98-residue chain is Bombyxin A-3 homolog (98 aa).

The signal sequence occupies residues 1–18; that stretch reads MRTQVLFLVLEVAAMASG. 3 cysteine pairs are disulfide-bonded: Cys26/Cys85, Cys38/Cys98, and Cys84/Cys89. A propeptide spans 47 to 75 (c peptide like); sequence TPYTSSESEGYGWRWLAPQRARQLAGARG.

The protein belongs to the insulin family. As to quaternary structure, heterodimer of a B chain and an A chain linked by two disulfide bonds.

The protein resides in the secreted. In terms of biological role, brain peptide responsible for activation of prothoracic glands to produce ecdysone in insects. In Samia cynthia (Ailanthus silkmoth), this protein is Bombyxin A-3 homolog (SBXA3).